The chain runs to 549 residues: CTP synthase (549 aa).

The segment at 1-272 is amidoligase domain; the sequence is MPPKSTTTKH…DAYVVRKLDL (272 aa). S19 provides a ligand contact to CTP. UTP is bound at residue S19. Residues 20–25 and D77 contribute to the ATP site; that span reads SLGKGL. Residues D77 and E146 each coordinate Mg(2+). CTP-binding positions include 153 to 155, 193 to 198, and K229; these read DIE and KTKPTQ. Residues 193-198 and K229 each bind UTP; that span reads KTKPTQ. The Glutamine amidotransferase type-1 domain maps to 297 to 548; it reads NLALVGKYID…VKAAVERKTG (252 aa). G360 contacts L-glutamine. Catalysis depends on C387, which acts as the Nucleophile; for glutamine hydrolysis. L-glutamine is bound by residues 388-391, E411, and R473; that span reads LGLQ. Residues H521 and E523 contribute to the active site.

Belongs to the CTP synthase family. Homotetramer.

It catalyses the reaction UTP + L-glutamine + ATP + H2O = CTP + L-glutamate + ADP + phosphate + 2 H(+). It carries out the reaction L-glutamine + H2O = L-glutamate + NH4(+). The enzyme catalyses UTP + NH4(+) + ATP = CTP + ADP + phosphate + 2 H(+). It participates in pyrimidine metabolism; CTP biosynthesis via de novo pathway; CTP from UDP: step 2/2. With respect to regulation, allosterically activated by GTP, when glutamine is the substrate; GTP has no effect on the reaction when ammonia is the substrate. The allosteric effector GTP functions by stabilizing the protein conformation that binds the tetrahedral intermediate(s) formed during glutamine hydrolysis. Inhibited by the product CTP, via allosteric rather than competitive inhibition. Catalyzes the ATP-dependent amination of UTP to CTP with either L-glutamine or ammonia as the source of nitrogen. Regulates intracellular CTP levels through interactions with the four ribonucleotide triphosphates. This Streptomyces avermitilis (strain ATCC 31267 / DSM 46492 / JCM 5070 / NBRC 14893 / NCIMB 12804 / NRRL 8165 / MA-4680) protein is CTP synthase.